Consider the following 480-residue polypeptide: Histone-lysine N-methyltransferase ASHR1 (480 aa).

The SET domain maps to 11–248 (RCLGVSNLPQ…KDSEITISYI (238 aa)). The Zn(2+) site is built by C56, C59, C68, C71, C77, C81, H89, and C93. The MYND-type zinc-finger motif lies at 56–93 (CDGCFKTNNLKKCSACQVVWYCGSSCQKSEWKLHRDEC).

It belongs to the class V-like SAM-binding methyltransferase superfamily. Histone-lysine methyltransferase family. SET2 subfamily.

The protein resides in the nucleus. Its subcellular location is the chromosome. The enzyme catalyses L-lysyl-[histone] + S-adenosyl-L-methionine = N(6)-methyl-L-lysyl-[histone] + S-adenosyl-L-homocysteine + H(+). Functionally, histone methyltransferase. The sequence is that of Histone-lysine N-methyltransferase ASHR1 (ASHR1) from Arabidopsis thaliana (Mouse-ear cress).